We begin with the raw amino-acid sequence, 48 residues long: Protein TUNAR (48 aa).

The tract at residues 1–20 is disordered; sequence MVITSGNDEDRGGQEKESKE. Over residues 8 to 20 the composition is skewed to basic and acidic residues; it reads DEDRGGQEKESKE. The helical transmembrane segment at 24–44 threads the bilayer; the sequence is LAMLGIIGTILNLIVIIFVYI.

As to quaternary structure, interacts with ATPase ATP2A2/SERCA2. Interacts with ATPase ATP2A3/SERCA3; the interaction occurs at low levels in low glucose conditions and is increased by high glucose levels. In the adult, expressed in Purkinje cells in the cerebellum, in motor neurons and interneurons in the spinal cord and in neurons of the cortex, hippocampus and thalamus (at protein level). Also detected in the developing cortex, hippocampus and thalamus at embryonic day E15.5 (at protein level).

The protein localises to the endoplasmic reticulum membrane. It is found in the extracellular vesicle membrane. Its function is as follows. In neurons, plays a role in the regulation of intracellular Ca(2+), possibly by acting as an activator of ATP2A2/SERCA2, thus increasing the efficiency with which Ca(2+) is removed from the cytoplasm. Inhibits differentiation of embryonic stem cells into neurons and inhibits neurite outgrowth, likely as a result of its role in intracellular Ca(2+) regulation. In pancreatic beta cells, lowers Ca(2+) levels in the endoplasmic reticulum and enhances glucose-stimulated insulin secretion. The chain is Protein TUNAR from Mus musculus (Mouse).